Consider the following 132-residue polypeptide: Phosphoribosyl-AMP cyclohydrolase (132 aa).

Aspartate 79 is a binding site for Mg(2+). Cysteine 80 provides a ligand contact to Zn(2+). 2 residues coordinate Mg(2+): aspartate 81 and aspartate 83. Zn(2+) is bound by residues cysteine 100 and cysteine 107.

This sequence belongs to the PRA-CH family. Homodimer. Requires Mg(2+) as cofactor. Zn(2+) serves as cofactor.

The protein localises to the cytoplasm. It carries out the reaction 1-(5-phospho-beta-D-ribosyl)-5'-AMP + H2O = 1-(5-phospho-beta-D-ribosyl)-5-[(5-phospho-beta-D-ribosylamino)methylideneamino]imidazole-4-carboxamide. The protein operates within amino-acid biosynthesis; L-histidine biosynthesis; L-histidine from 5-phospho-alpha-D-ribose 1-diphosphate: step 3/9. Functionally, catalyzes the hydrolysis of the adenine ring of phosphoribosyl-AMP. The polypeptide is Phosphoribosyl-AMP cyclohydrolase (Acidovorax ebreus (strain TPSY) (Diaphorobacter sp. (strain TPSY))).